The sequence spans 285 residues: Putative L(+)-tartrate dehydratase subunit alpha (285 aa).

The iron-sulfur cluster site is built by Cys-60, Cys-182, and Cys-269.

The protein belongs to the class-I fumarase family. Tetramer of two alpha and two beta subunits. Iron-sulfur cluster is required as a cofactor.

It catalyses the reaction (2R,3R)-tartrate = oxaloacetate + H2O. The polypeptide is Putative L(+)-tartrate dehydratase subunit alpha (Methanocaldococcus jannaschii (strain ATCC 43067 / DSM 2661 / JAL-1 / JCM 10045 / NBRC 100440) (Methanococcus jannaschii)).